Here is a 364-residue protein sequence, read N- to C-terminus: GTPase Obg (364 aa).

Positions 1–159 (MKFIDEARIE…RNLRLELKVL (159 aa)) constitute an Obg domain. A disordered region spans residues 128–147 (IHFKSSTNRAPRQKTDGKAG). The OBG-type G domain occupies 160–334 (ADVGLLGMPN…LVHAIQEYLD (175 aa)). GTP is bound by residues 166–173 (GMPNAGKS), 191–195 (FTTLH), 213–216 (DIPG), 284–287 (NKLD), and 315–317 (SAL). Mg(2+) contacts are provided by Ser173 and Thr193. The disordered stretch occupies residues 340 to 364 (EDAAAAAPDQRLDPTLHNVDHDDQA). Basic and acidic residues predominate over residues 349–364 (QRLDPTLHNVDHDDQA).

The protein belongs to the TRAFAC class OBG-HflX-like GTPase superfamily. OBG GTPase family. In terms of assembly, monomer. Mg(2+) serves as cofactor.

It localises to the cytoplasm. Functionally, an essential GTPase which binds GTP, GDP and possibly (p)ppGpp with moderate affinity, with high nucleotide exchange rates and a fairly low GTP hydrolysis rate. Plays a role in control of the cell cycle, stress response, ribosome biogenesis and in those bacteria that undergo differentiation, in morphogenesis control. The polypeptide is GTPase Obg (Ralstonia pickettii (strain 12J)).